A 150-amino-acid chain; its full sequence is Aspartate 1-decarboxylase (150 aa).

Ser-24 functions as the Schiff-base intermediate with substrate; via pyruvic acid in the catalytic mechanism. Ser-24 is subject to Pyruvic acid (Ser). A substrate-binding site is contributed by Thr-56. Residue Tyr-57 is the Proton donor of the active site. 72-74 (GAA) provides a ligand contact to substrate.

Belongs to the PanD family. As to quaternary structure, heterooctamer of four alpha and four beta subunits. Requires pyruvate as cofactor. Is synthesized initially as an inactive proenzyme, which is activated by self-cleavage at a specific serine bond to produce a beta-subunit with a hydroxyl group at its C-terminus and an alpha-subunit with a pyruvoyl group at its N-terminus.

It localises to the cytoplasm. It carries out the reaction L-aspartate + H(+) = beta-alanine + CO2. It participates in cofactor biosynthesis; (R)-pantothenate biosynthesis; beta-alanine from L-aspartate: step 1/1. Catalyzes the pyruvoyl-dependent decarboxylation of aspartate to produce beta-alanine. The polypeptide is Aspartate 1-decarboxylase (Beijerinckia indica subsp. indica (strain ATCC 9039 / DSM 1715 / NCIMB 8712)).